The following is a 296-amino-acid chain: uncharacterized protein (296 aa).

The protein localises to the mitochondrion. This is an uncharacterized protein from Podospora anserina (strain S / ATCC MYA-4624 / DSM 980 / FGSC 10383) (Pleurage anserina).